We begin with the raw amino-acid sequence, 828 residues long: Hapless 2 (828 aa).

The first 32 residues, 1-32, serve as a signal peptide directing secretion; the sequence is MKNKLINLRSKHIYKLIIIIFFCIILKYYKWC. Over 33 to 680 the chain is Extracellular; it reads DFKNKVFFIQ…INTVKTLIGK (648 aa). A disulfide bridge links cysteine 53 with cysteine 62. Residue asparagine 74 is glycosylated (N-linked (GlcNAc...) asparagine). Disulfide bonds link cysteine 142–cysteine 209, cysteine 170–cysteine 381, cysteine 172–cysteine 191, and cysteine 363–cysteine 388. The segment at 174 to 191 is cd loop; involved in gamete fusion; it reads TYNYFKDDEFIKRAKLKC. Residues asparagine 233, asparagine 250, asparagine 264, asparagine 293, and asparagine 333 are each glycosylated (N-linked (GlcNAc...) asparagine). N-linked (GlcNAc...) asparagine glycosylation is found at asparagine 479, asparagine 516, asparagine 531, and asparagine 539. The cysteines at positions 546 and 592 are disulfide-linked. The helical transmembrane segment at 681 to 701 threads the bilayer; the sequence is FAIIAILIILAPALIPLLPFF. The Cytoplasmic portion of the chain corresponds to 702–828; it reads LNFFFLFIST…SGKSKIPPLR (127 aa). The tract at residues 773-828 is disordered; sequence RKNKKKFNKNNISSNIKHKKGGKKVKQKEPNRNSNHTSHEYADTSPSGKSKIPPLR. Over residues 788 to 798 the composition is skewed to basic residues; it reads IKHKKGGKKVK. A compositionally biased stretch (basic and acidic residues) spans 799–814; it reads QKEPNRNSNHTSHEYA.

It belongs to the HAP2/GCS1 family.

Its subcellular location is the cell membrane. In terms of biological role, during fertilization, required on male gametes for their fusion with female gametes, and for subsequent ookinete formation in the host. Thereby, required for mosquito-mediated transmission to other animals. Probably initiates the fusion of gamete cell membranes by inserting part of its extracellular domain into the cell membrane of a female gamete. This Plasmodium berghei (strain Anka) protein is Hapless 2.